A 327-amino-acid chain; its full sequence is Probable cytosolic iron-sulfur protein assembly protein CIAO1 homolog (327 aa).

7 WD repeats span residues 3-42, 48-87, 92-131, 137-176, 181-220, 239-278, and 290-327; these read GHED…WICK, GHQR…FECN, GHEN…EYEC, SHTQ…WSCC, GHES…NQEG, YHDR…DRNQ, and AHSM…PAEE.

Belongs to the WD repeat CIA1 family.

Its function is as follows. Essential component of the cytosolic iron-sulfur (Fe/S) protein assembly machinery. Required for the maturation of extramitochondrial Fe/S proteins. This Nematostella vectensis (Starlet sea anemone) protein is Probable cytosolic iron-sulfur protein assembly protein CIAO1 homolog.